A 991-amino-acid chain; its full sequence is MATSSFNINELVASHGDKGLLATALVDKTAHEQLEEQLQHQRRGLKVYIRNVLDVKDSEVIRTRYGGKYDLHLAQQELAPHGLAGALRLCETLDCLDFFPRSGLRQDLVLDFGGSWVTHYLRGHNVHCCSPCLGIRDKMRHTERLMSMRKVILNDPQQFDGRQPDFCTKSAAECKVQAHFAISIHGGYDMGFRGLCEAMNAHGTTILKGTMMFDGAMMFDDQGFIPELKCQWRKIKSAFSEEEDATCSAAKLNSSVFSRVRNGKTLIAFDFVEESTMSYVHDWDNIKSFMTDQTYSFNGMTYGIERCVIYAGVMTYKIVGVPGMCPPELIRHCIWFPSMKDYVGLKIPASDDLVKWKTVRILLSTLRETEEIAMRCYNDKKNWMDLFKIILGVLSSKSSTIVINGMSMQSGERIDLNDYHYIGFAILLHTKLKYEQLGKMYDMWNASFIWKWFASMSRPFRVFFSTVVKTLFPTLRPREEKEFLVKLSTFVTFNEECSFDGGKEWDVISSAAFVATQAVADGTILAEEKAKKLADRLAVPVEEVTAIPEVSPTPVDQGTACGLETETSELDSLSAQTRSPIARIAERATAMLEYSAYEKQLHDTTVSNLQRIWCMAGGDNKRNSLESNLKFVFDTYFSVDALVNVHFPTGRWMHPVPEGVVYSVGYNEKGLGPKLDSELYIVNGDCVISNSHDLFSITKSLLAPTGTISQVDGVAGCGKTTAIKSMFNPSTDIIVTANKKSAQDVRYALFKSTDSKEACAFVRTADSILLNDCPTVSRVLVDEVVLLHFGQLCAVMSKLHAVRALCFGDSEQIAFSSRDASFDMRFSKLIPDETSDADTTFRSPQDVVPLVRLMATKALPKGTRTKYSDGAQSKVRKSVTSRAVASVSLVELDPTRFYITMTQADKASLITRAKELNLPKAFYTDRIKTVHESQGISEDHVTLVRLKSTKCDLFKKFSYCLVAVTRHKVTFRYEYCGVLGGDLIANCIPLV.

The tract at residues 52–409 (VLDVKDSEVI…TIVINGMSMQ (358 aa)) is methyltransferase. In terms of domain architecture, Alphavirus-like MT spans 72–290 (HLAQQELAPH…HDWDNIKSFM (219 aa)). The region spanning 686 to 837 (CVISNSHDLF…KLIPDETSDA (152 aa)) is the (+)RNA virus helicase ATP-binding domain. An ATP-dependent helicase region spans residues 711–973 (VDGVAGCGKT…VTRHKVTFRY (263 aa)). 713–720 (GVAGCGKT) serves as a coordination point for ATP. Residues 838-991 (DTTFRSPQDV…DLIANCIPLV (154 aa)) form the (+)RNA virus helicase C-terminal domain.

This sequence belongs to the bromoviridae replication protein 1a family. As to quaternary structure, interacts with RNA-directed RNA polymerase 2a.

Its subcellular location is the host endoplasmic reticulum membrane. In terms of biological role, involved in the virus replication. Contains a helicase domain and a methyltransferase domain. The methyltransferase domain is probably involved in viral RNA capping. Involved in the formation of ER membrane spherular invaginations in which RNA replication complexes form. In Cucumber mosaic virus (strain Q) (CMV), this protein is Replication protein 1a.